The chain runs to 198 residues: Probable GTP-binding protein EngB (198 aa).

One can recognise an EngB-type G domain in the interval 27-198; the sequence is DLPEVALAGR…ESWDTILSEL (172 aa). GTP is bound by residues 35–42, 62–66, 80–83, 147–150, and 179–181; these read GRSNVGKS, GKTQL, DVPG, TKAD, and FSS. The Mg(2+) site is built by serine 42 and threonine 64.

The protein belongs to the TRAFAC class TrmE-Era-EngA-EngB-Septin-like GTPase superfamily. EngB GTPase family. Requires Mg(2+) as cofactor.

Functionally, necessary for normal cell division and for the maintenance of normal septation. The protein is Probable GTP-binding protein EngB of Streptococcus agalactiae serotype III (strain NEM316).